A 264-amino-acid polypeptide reads, in one-letter code: uncharacterized protein (264 aa).

Residues 3 to 243 (LQLDNVSLKR…QILSAFFDTP (241 aa)) form the ABC transporter domain. 35-42 (GLNGAGKT) serves as a coordination point for ATP.

This sequence belongs to the ABC transporter superfamily.

This is an uncharacterized protein from Bacillus subtilis (strain 168).